We begin with the raw amino-acid sequence, 162 residues long: Caveolin-2 (162 aa).

At 1 to 86 the chain is on the cytoplasmic side; that stretch reads MGLETEKADV…FEISKYVMYK (86 aa). A Phosphotyrosine; by SRC modification is found at Tyr19. Residues Ser20 and Ser23 each carry the phosphoserine modification. Position 27 is a phosphotyrosine; by SRC (Tyr27). Position 36 is a phosphoserine (Ser36). The helical intramembrane region spans 87-107; that stretch reads FLTVFLAIPLAFIAGILFATL. The Cytoplasmic segment spans residues 108-162; it reads SCLHIWILMPFVKTCLMVLPSVQTIWKSVTDVFIAPLCTSIGRSFSSVSLQLSQD.

Belongs to the caveolin family. As to quaternary structure, monomer or homodimer. Interacts with CAV1; the interaction forms a stable heterooligomeric complex that is required for targeting to lipid rafts and for caveolae formation. Tyrosine phosphorylated forms do not form heterooligomers with the Tyr-19-phosphorylated form existing as a monomer or dimer, and the Tyr-27-form as a monomer only. Interacts (tyrosine phosphorylated form) with the SH2 domain-containing proteins, RASA1, NCK1 and SRC. Interacts (tyrosine phosphorylated form) with INSR, the interaction (Tyr-27-phosphorylated form) is increased on insulin stimulation. Interacts (Tyr-19 phosphorylated form) with MAPK1 (phosphorylated form); the interaction, promoted by insulin, leads to nuclear location and MAPK1 activation. Interacts with STAT3; the interaction is increased on insulin-induced tyrosine phosphorylation leading to STAT activation. Post-translationally, phosphorylated on serine and tyrosine residues. CAV1 promotes phosphorylation on Ser-23 which then targets the complex to the plasma membrane, lipid rafts and caveolae. Phosphorylation on Ser-36 appears to modulate mitosis in endothelial cells. Phosphorylation on both Tyr-19 and Tyr-27 is required for insulin-induced 'Ser-727' phosphorylation of STAT3 and its activation. Phosphorylation on Tyr-19 is required for insulin-induced phosphorylation of MAPK1 and DNA binding of STAT3. Tyrosine phosphorylation is induced by both EGF and insulin (By. similarity).

Its subcellular location is the nucleus. It is found in the cytoplasm. It localises to the golgi apparatus membrane. The protein resides in the cell membrane. The protein localises to the membrane. Its subcellular location is the caveola. In terms of biological role, may act as a scaffolding protein within caveolar membranes. Interacts directly with G-protein alpha subunits and can functionally regulate their activity. Acts as an accessory protein in conjunction with CAV1 in targeting to lipid rafts and driving caveolae formation. The Ser-36 phosphorylated form has a role in modulating mitosis in endothelial cells. Positive regulator of cellular mitogenesis of the MAPK signaling pathway. Required for the insulin-stimulated nuclear translocation and activation of MAPK1 and STAT3, and the subsequent regulation of cell cycle progression. This chain is Caveolin-2 (CAV2), found in Papio anubis (Olive baboon).